The primary structure comprises 143 residues: MSMALLPRRVKYRKSQRGSRKGNATRGTELAFGSFGMQALERAWITNTQIEAARVAIMRNVKRKGRLWIRIFPDKSVTARPPETRMGKGKGQPAFWVAVVLPGRILFELDGLPEQVAKESMRLAAAKLPIHTRFITRERLVKV.

The segment at 1–26 (MSMALLPRRVKYRKSQRGSRKGNATR) is disordered. Residues 8–20 (RRVKYRKSQRGSR) are compositionally biased toward basic residues.

Belongs to the universal ribosomal protein uL16 family. As to quaternary structure, part of the 50S ribosomal subunit.

Binds 23S rRNA and is also seen to make contacts with the A and possibly P site tRNAs. The polypeptide is Large ribosomal subunit protein uL16 (Methylacidiphilum infernorum (isolate V4) (Methylokorus infernorum (strain V4))).